Here is a 2869-residue protein sequence, read N- to C-terminus: uncharacterized protein (2869 aa).

Residues 1–10 (MNINRNNIND) are compositionally biased toward low complexity. Disordered stretches follow at residues 1-132 (MNIN…SSNK), 171-349 (NNNN…DNYR), 380-485 (FNES…TSSS), 498-517 (KEKH…KPKK), 690-812 (NQNQ…NQNQ), 860-1074 (INNN…INSN), 1108-1175 (INNI…NSNS), 1188-1216 (SNSN…VDVD), 1224-1243 (VFIV…SVKT), 1340-1448 (ESNS…GNNI), 1476-1704 (IDNC…SNYY), 1731-1832 (NSNS…NEGF), and 2725-2773 (DRVR…NNNE). Polar residues predominate over residues 14 to 25 (HSTSFNDNFDSF). Low complexity-rich tracts occupy residues 26–124 (GNQN…NPKN), 171–348 (NNNN…YDNY), 388–414 (NNNT…LNNN), 421–446 (YYDN…QTNK), and 454–478 (KNNN…NSNN). Residues 505–514 (HENGDISESK) are compositionally biased toward basic and acidic residues. Composition is skewed to low complexity over residues 690 to 707 (NQNQ…QNHQ) and 714 to 749 (PQRQ…NQDQ). Residues 750 to 763 (YQDHDHEHEHDHDQ) show a composition bias toward basic and acidic residues. Residues 764–781 (NQNQNQNQHQSRNQNQDQ) show a composition bias toward low complexity. Residues 782-795 (YQDHDHEHEHDHDQ) are compositionally biased toward basic and acidic residues. 5 stretches are compositionally biased toward low complexity: residues 796-812 (NQNQ…NQNQ), 860-891 (INNN…QSQN), 898-911 (DNRI…SSRD), 921-991 (CDFN…SFNN), and 1000-1074 (NNHN…INSN). Low complexity predominate over residues 1188 to 1212 (SNSNGFNNNNSNDQRNIDSSSNSDI). Positions 1230–1243 (TSSNKSNRASSVKT) are enriched in polar residues. Composition is skewed to low complexity over residues 1377-1448 (DNGN…GNNI) and 1476-1639 (IDNC…NDND). Residues 1640–1659 (IGNDFDNDNDNDSYIDDDNN) show a composition bias toward acidic residues. Composition is skewed to low complexity over residues 1660–1704 (VYDN…SNYY), 1731–1823 (NSNS…NNNS), and 2739–2754 (SSSG…SGGS). The span at 2758–2773 (NLDDSENESDSENNNE) shows a compositional bias: acidic residues.

This is an uncharacterized protein from Dictyostelium discoideum (Social amoeba).